A 346-amino-acid chain; its full sequence is Isopentenyl-diphosphate delta-isomerase (346 aa).

Substrate is bound at residue 12 to 13 (RK). FMN is bound by residues 67-69 (ALT), Ser97, and Asn126. A substrate-binding site is contributed by 97–99 (SQR). Gln156 serves as a coordination point for substrate. Glu157 is a Mg(2+) binding site. Residues Lys188, Thr218, 263–265 (GIR), and 284–285 (AG) contribute to the FMN site.

It belongs to the IPP isomerase type 2 family. In terms of assembly, homooctamer. Dimer of tetramers. FMN serves as cofactor. The cofactor is NADPH. Mg(2+) is required as a cofactor.

It is found in the cytoplasm. The catalysed reaction is isopentenyl diphosphate = dimethylallyl diphosphate. In terms of biological role, involved in the biosynthesis of isoprenoids. Catalyzes the 1,3-allylic rearrangement of the homoallylic substrate isopentenyl (IPP) to its allylic isomer, dimethylallyl diphosphate (DMAPP). In Moorella thermoacetica (strain ATCC 39073 / JCM 9320), this protein is Isopentenyl-diphosphate delta-isomerase.